The primary structure comprises 322 residues: Mitochondrial thiamine pyrophosphate carrier 1 (322 aa).

3 Solcar repeats span residues 12–111 (GSKT…VTLA), 122–208 (PAAA…LRVP), and 215–310 (PFGS…VLRL). A run of 6 helical transmembrane segments spans residues 18–38 (MIAG…LDVV), 92–108 (LMYV…YRSV), 128–148 (FIAG…LDLL), 180–200 (FFQG…IFFA), 221–241 (ATAG…FDLI), and 285–302 (GLTV…VTMW).

It belongs to the mitochondrial carrier (TC 2.A.29) family.

The protein resides in the mitochondrion inner membrane. Functionally, mitochondrial transporter that mediates uptake of thiamine pyrophosphate (ThPP) into mitochondria. The polypeptide is Mitochondrial thiamine pyrophosphate carrier 1 (tpc1) (Sclerotinia sclerotiorum (strain ATCC 18683 / 1980 / Ss-1) (White mold)).